The primary structure comprises 265 residues: MEVREIRKQLEEKLNRPEWTLSYDHKEAKLRIEDKELKKGMTIALKPLLAKVERLGDRAISEMVHYVQTGMAAFKKQTTIKGNEKRIFPVIRATSFPEENRDGHRLLFDEHTAETRVYYSLDLGDSYTLLHEQQLSREEMSAKEIREMALFNLRSLSEPLKADKVAGNTFYFLNSNDGYDASRILNESLLEKMSQKVEGQLAVAAPHQDVLIFADIVNERGYDVLAQVTMQFYAQGRIPITALPFLYENGELEPTFILAQRKPKE.

The protein belongs to the UPF0354 family.

This chain is UPF0354 protein BH3252, found in Halalkalibacterium halodurans (strain ATCC BAA-125 / DSM 18197 / FERM 7344 / JCM 9153 / C-125) (Bacillus halodurans).